A 1235-amino-acid chain; its full sequence is MRSRSNSGVRLDGYARLVQQTILCYQNPVTGLLSASHDQKDAWVRDNIYSILAVWGLGMAYRKNADRDEDKAKAYELEQNVVKLMRGLLQCMMRQVDKVEKFKHTQSTKDSLHAKYNTATCSTVVGDDQWGHLQVDATSLFLLFLAQMTASGLRIIFTLDEVAFIQNLVFYIEAAYKVADYGMWERGDKTNQGIPELNASSVGVAKAALEAIDELDLFGAHGGRKSVIHVLPDEVEHCQSILFSMLPRASTSKEIDAGLLSIISFPAFAVEDVNLVNVTKNEIISKLQGRYGCCRFLRDGYKTPREDPHRLHYDPAELKLFENIECEWPVFWTYLIIDGIFNGDAVQVQEYREALEGILIRGKDGIHLVPELYAIPPDKVDEEYKNPHTVDRVPLGKLPHLWGQSLYILSSLLAEGFLATGEIDPLNRRFSTSVKPDVVVQVAVLAENSHIKGLLKEHGMTVQSIADVHPIRVQPGRILSHIYAKLGRNKNMKLSGRPYRHIGVLGTSKLYVIRNHIFTFTPQFTDQHHFYLALDNEMIVEMLRIELAYLCTCWRMTGRPTLTFPVTHTMLTNDGSDIHPAVLSTIRKLEDGYFGGARVKLGNLAEFLTTSFYTHLTFLDPDCDEKLFGDITDRSFSPDSEPDLGGYLEDSSPQESQDELDQYISHLLQSTSLKCYLPPLCKKSEDSHFFSAIHSTRDILSVMAKAKGLETTFFPMILPTKVLSGHRKSLNLVDSPQPLLKTTPEYDYQWPRDDHDEVDCEKLVGQLKDCSNLQDQADILYILYVMKGPRWDTNLFGQHGVTVHSLLSELYGKAGLNQEWSLIRYISGLLRKKVEVLAEACADLLSHQKQLTVGLPPEPREKTISTPLPPEELTELIYEASGQDISIAVLTQEIVVYLAMYVRAQPSLFAEMLRLRIGLIIQVMATELARSLNCSGKEASESLMNLSPFDMKSLLHHILSGKEFGVERSVRPIHSSMSSPAISIHEVGHTGATKTERSGITRLRSEMKQMNRRASADEQFFPLGQTMSNSLHSIKSVRSSTPSSPTGTSSTDSGGQHLGWGEQQGQWLRRRRLDGAINRVPVGFYQKVWKILQKCHGLSIDGYVLPSSTTQEMTPCEIKFAVHVESVLNRVSQPEYRQLLVEAIMVLTLLSDTEMDSIGGIIHVDQIVQLANQLFLQDQVSFGTTDILEKDQATGICHLFYDSAPSGAYGTMTYLTKAVASHLQELLPSSGCQMQ.

A disordered region spans residues 636-655 (FSPDSEPDLGGYLEDSSPQE). Residues S695, S729, and S735 each carry the phosphoserine modification. The calmodulin-binding stretch occupies residues 807-837 (LSELYGKAGLNQEWSLIRYISGLLRKKVEVL). 3 positions are modified to phosphoserine: S983, S1015, and S1044. Positions 1033–1060 (SIKSVRSSTPSSPTGTSSTDSGGQHLGW) are disordered. A compositionally biased stretch (low complexity) spans 1039-1055 (SSTPSSPTGTSSTDSGG). Positions 1059-1099 (GWGEQQGQWLRRRRLDGAINRVPVGFYQKVWKILQKCHGLS) are calmodulin-binding. C1232 carries the S-farnesyl cysteine lipid modification.

This sequence belongs to the phosphorylase b kinase regulatory chain family. In terms of assembly, hexadecamer of 4 heterotetramers, each composed of alpha, beta, gamma, and delta subunits. Alpha (PHKA1 or PHKA2) and beta (PHKB) are regulatory subunits, gamma (PHKG1 or PHKG2) is the catalytic subunit, and delta is calmodulin. Although the final Cys may be farnesylated, the terminal tripeptide is probably not removed, and the C-terminus is not methylated.

Its subcellular location is the cell membrane. It functions in the pathway glycan biosynthesis; glycogen metabolism. By phosphorylation of various serine residues and by calcium. Functionally, phosphorylase b kinase catalyzes the phosphorylation of serine in certain substrates, including troponin I. The alpha chain may bind calmodulin. This chain is Phosphorylase b kinase regulatory subunit alpha, liver isoform (Phka2), found in Mus musculus (Mouse).